The chain runs to 200 residues: Holliday junction branch migration complex subunit RuvA (200 aa).

Residues 1 to 64 are domain I; it reads MIGHLRGIIV…EDAHTLYGFH (64 aa). Residues 65–143 form a domain II region; that stretch reads NDHERRLFRA…RWHTNDTPSP (79 aa). Residues 133 to 152 are disordered; it reads SRWHTNDTPSPEGLRSSNTQ. Residues 144–148 form a flexible linker region; the sequence is EGLRS. Positions 149–200 are domain III; it reads SNTQPTQDAISALMALGYKPQEAKRAIDAIQKPDLSAETLIRLALKQMVLGT.

Belongs to the RuvA family. Homotetramer. Forms an RuvA(8)-RuvB(12)-Holliday junction (HJ) complex. HJ DNA is sandwiched between 2 RuvA tetramers; dsDNA enters through RuvA and exits via RuvB. An RuvB hexamer assembles on each DNA strand where it exits the tetramer. Each RuvB hexamer is contacted by two RuvA subunits (via domain III) on 2 adjacent RuvB subunits; this complex drives branch migration. In the full resolvosome a probable DNA-RuvA(4)-RuvB(12)-RuvC(2) complex forms which resolves the HJ.

The protein localises to the cytoplasm. The RuvA-RuvB-RuvC complex processes Holliday junction (HJ) DNA during genetic recombination and DNA repair, while the RuvA-RuvB complex plays an important role in the rescue of blocked DNA replication forks via replication fork reversal (RFR). RuvA specifically binds to HJ cruciform DNA, conferring on it an open structure. The RuvB hexamer acts as an ATP-dependent pump, pulling dsDNA into and through the RuvAB complex. HJ branch migration allows RuvC to scan DNA until it finds its consensus sequence, where it cleaves and resolves the cruciform DNA. This Coxiella burnetii (strain Dugway 5J108-111) protein is Holliday junction branch migration complex subunit RuvA.